The sequence spans 100 residues: ATP synthase subunit g 2, mitochondrial (100 aa).

This sequence belongs to the ATPase g subunit family. F-type ATPases have 2 components, CF(1) - the catalytic core - and CF(0) - the membrane proton channel. CF(0) seems to have nine subunits: a, b, c, d, e, f, g, F6 and 8 (or A6L).

It localises to the mitochondrion membrane. Its function is as follows. Mitochondrial membrane ATP synthase (F(1)F(0) ATP synthase or Complex V) produces ATP from ADP in the presence of a proton gradient across the membrane which is generated by electron transport complexes of the respiratory chain. F-type ATPases consist of two structural domains, F(1) - containing the extramembraneous catalytic core, and F(0) - containing the membrane proton channel, linked together by a central stalk and a peripheral stalk. During catalysis, ATP synthesis in the catalytic domain of F(1) is coupled via a rotary mechanism of the central stalk subunits to proton translocation. Part of the complex F(0) domain. Minor subunit located with subunit a in the membrane. The polypeptide is ATP synthase subunit g 2, mitochondrial (Homo sapiens (Human)).